The sequence spans 315 residues: 1,2-dihydroxy-3,5-cyclohexadiene-1,4-dicarboxylate dehydrogenase (315 aa).

The a divalent metal cation site is built by His159, His203, and His255.

Belongs to the PdxA family.

It catalyses the reaction (3S,4R)-3,4-dihydroxycyclohexa-1,5-diene-1,4-dicarboxylate + NAD(+) = 3,4-dihydroxybenzoate + CO2 + NADH. Functionally, involved in the degradation of terephthalate (TPA) via the protocatechuate (PCA) 4,5-cleavage pathway. Catalyzes the dehydrogenation of 1,2-dihydroxy-3,5-cyclohexadiene-1,4-dicarboxylate (DCD) to yield protocatechuate (PCA). In Comamonas sp, this protein is 1,2-dihydroxy-3,5-cyclohexadiene-1,4-dicarboxylate dehydrogenase (tphBI).